The following is a 421-amino-acid chain: Gamma-glutamyl phosphate reductase (421 aa).

This sequence belongs to the gamma-glutamyl phosphate reductase family.

It is found in the cytoplasm. It catalyses the reaction L-glutamate 5-semialdehyde + phosphate + NADP(+) = L-glutamyl 5-phosphate + NADPH + H(+). The protein operates within amino-acid biosynthesis; L-proline biosynthesis; L-glutamate 5-semialdehyde from L-glutamate: step 2/2. Its function is as follows. Catalyzes the NADPH-dependent reduction of L-glutamate 5-phosphate into L-glutamate 5-semialdehyde and phosphate. The product spontaneously undergoes cyclization to form 1-pyrroline-5-carboxylate. The protein is Gamma-glutamyl phosphate reductase of Leifsonia xyli subsp. xyli (strain CTCB07).